Consider the following 357-residue polypeptide: Cobalt-precorrin-5B C(1)-methyltransferase (357 aa).

This sequence belongs to the CbiD family.

The catalysed reaction is Co-precorrin-5B + S-adenosyl-L-methionine = Co-precorrin-6A + S-adenosyl-L-homocysteine. It functions in the pathway cofactor biosynthesis; adenosylcobalamin biosynthesis; cob(II)yrinate a,c-diamide from sirohydrochlorin (anaerobic route): step 6/10. Catalyzes the methylation of C-1 in cobalt-precorrin-5B to form cobalt-precorrin-6A. The polypeptide is Cobalt-precorrin-5B C(1)-methyltransferase (Rhodospirillum rubrum (strain ATCC 11170 / ATH 1.1.1 / DSM 467 / LMG 4362 / NCIMB 8255 / S1)).